Here is a 141-residue protein sequence, read N- to C-terminus: ATP synthase epsilon chain (141 aa).

Belongs to the ATPase epsilon chain family. As to quaternary structure, F-type ATPases have 2 components, CF(1) - the catalytic core - and CF(0) - the membrane proton channel. CF(1) has five subunits: alpha(3), beta(3), gamma(1), delta(1), epsilon(1). CF(0) has three main subunits: a, b and c.

Its subcellular location is the cell membrane. Functionally, produces ATP from ADP in the presence of a proton gradient across the membrane. The polypeptide is ATP synthase epsilon chain (Lactococcus lactis subsp. lactis (strain IL1403) (Streptococcus lactis)).